A 435-amino-acid polypeptide reads, in one-letter code: Elongation factor 1-alpha (435 aa).

The tr-type G domain maps to 4-227 (KPHLNLIVIG…YLDQLELPPK (224 aa)). The G1 stretch occupies residues 13–20 (GHIDHGKS). 13-20 (GHIDHGKS) is a GTP binding site. Ser-20 is a Mg(2+) binding site. The interval 69 to 73 (GVTIN) is G2. Positions 90-93 (DAPG) are G3. GTP contacts are provided by residues 90–94 (DAPGH) and 152–155 (NKMD). The interval 152-155 (NKMD) is G4. Residues 193-195 (VAP) are G5.

It belongs to the TRAFAC class translation factor GTPase superfamily. Classic translation factor GTPase family. EF-Tu/EF-1A subfamily.

It localises to the cytoplasm. The enzyme catalyses GTP + H2O = GDP + phosphate + H(+). GTP hydrolase that promotes the GTP-dependent binding of aminoacyl-tRNA to the A-site of ribosomes during protein biosynthesis. The sequence is that of Elongation factor 1-alpha from Saccharolobus solfataricus (strain ATCC 35092 / DSM 1617 / JCM 11322 / P2) (Sulfolobus solfataricus).